We begin with the raw amino-acid sequence, 625 residues long: tRNA uridine 5-carboxymethylaminomethyl modification enzyme MnmG (625 aa).

FAD is bound by residues 9 to 14 (GGGHAG), V121, and S177. NAD(+) is bound at residue 271–285 (GPRYCPSIEDKVNRF). An FAD-binding site is contributed by Q368.

It belongs to the MnmG family. As to quaternary structure, homodimer. Heterotetramer of two MnmE and two MnmG subunits. FAD serves as cofactor.

It is found in the cytoplasm. NAD-binding protein involved in the addition of a carboxymethylaminomethyl (cmnm) group at the wobble position (U34) of certain tRNAs, forming tRNA-cmnm(5)s(2)U34. This Aliarcobacter butzleri (strain RM4018) (Arcobacter butzleri) protein is tRNA uridine 5-carboxymethylaminomethyl modification enzyme MnmG.